A 247-amino-acid polypeptide reads, in one-letter code: SPX domain-containing protein 5 (247 aa).

The 139-residue stretch at 1 to 139 folds into the SPX domain; it reads MKFGKRLKRQ…GGVLRLPVIA (139 aa). The segment at 224-247 is disordered; sequence SDWLIQSVQPPPPPPPSSPLIIPT. The span at 232–241 shows a compositional bias: pro residues; that stretch reads QPPPPPPPSS.

This is SPX domain-containing protein 5 (SPX5) from Oryza sativa subsp. indica (Rice).